Consider the following 43-residue polypeptide: Protein PsbN (43 aa).

The chain crosses the membrane as a helical span at residues 4-24; sequence ATVLSITFAVILIAITGLAVY.

It belongs to the PsbN family.

Its subcellular location is the cellular thylakoid membrane. In terms of biological role, may play a role in photosystem I and II biogenesis. This Synechocystis sp. (strain ATCC 27184 / PCC 6803 / Kazusa) protein is Protein PsbN.